A 185-amino-acid polypeptide reads, in one-letter code: Ribosome-recycling factor (185 aa).

It belongs to the RRF family.

Its subcellular location is the cytoplasm. In terms of biological role, responsible for the release of ribosomes from messenger RNA at the termination of protein biosynthesis. May increase the efficiency of translation by recycling ribosomes from one round of translation to another. This chain is Ribosome-recycling factor, found in Mycobacterium bovis (strain BCG / Pasteur 1173P2).